Here is a 316-residue protein sequence, read N- to C-terminus: Olfactory receptor 2G6 (316 aa).

Topologically, residues 1–25 (MEETNNSSEKGFLLLGFSDQPQLER) are extracellular. Asparagine 5 and asparagine 6 each carry an N-linked (GlcNAc...) asparagine glycan. Residues 26–49 (FLFAIILYFYVLSLLGNTALILVC) form a helical membrane-spanning segment. The Cytoplasmic portion of the chain corresponds to 50 to 57 (CLDSRLHT). Residues 58–79 (PMYFFLSNLSCVDICFTTSVAP) traverse the membrane as a helical segment. The Extracellular portion of the chain corresponds to 80–100 (QLLVTMNKKDKTMSYGGCVAQ). Cysteine 97 and cysteine 189 form a disulfide bridge. The chain crosses the membrane as a helical span at residues 101–120 (LYVAMGLGSSECILLAVMAY). Residues 121–139 (DRYAAVCRPLRYIAIMHPR) are Cytoplasmic-facing. The helical transmembrane segment at 140–158 (FCASLAGGAWLSGLITSLI) threads the bilayer. The Extracellular portion of the chain corresponds to 159-195 (QCSLTVQLPLCGHRTLDHIFCEVPVLIKLACVDTTFN). A helical transmembrane segment spans residues 196–219 (EAELFVASVVFLIVPVLLILVSYG). At 220 to 236 (FITQAVLRIKSAAGRQK) the chain is on the cytoplasmic side. Residues 237–259 (AFGTCSSHLVVVIIFYGTIIFMY) traverse the membrane as a helical segment. Residues 260 to 272 (LQPANRRSKNQGK) are Extracellular-facing. A helical transmembrane segment spans residues 273–292 (FVSLFYTIVTPLLNPIIYTL). Residues 293–316 (RNKDVKGALRTLILGSAAGQSHKD) are Cytoplasmic-facing.

This sequence belongs to the G-protein coupled receptor 1 family.

The protein resides in the cell membrane. Its function is as follows. Odorant receptor. This Homo sapiens (Human) protein is Olfactory receptor 2G6 (OR2G6).